The chain runs to 548 residues: 5-aminolevulinate synthase, mitochondrial (548 aa).

A mitochondrion-targeting transit peptide spans 1–22 (MQRSIFARFGNSSAAVSTLNRL). Positions 91, 204, and 223 each coordinate substrate. The pyridoxal 5'-phosphate site is built by Ser256, His284, and Thr334. Lys337 is an active-site residue. N6-(pyridoxal phosphate)lysine is present on Lys337. Pyridoxal 5'-phosphate-binding residues include Thr366 and Thr367. Substrate is bound at residue Thr452.

Belongs to the class-II pyridoxal-phosphate-dependent aminotransferase family. Homodimer. Interacts with MCX1. The cofactor is pyridoxal 5'-phosphate.

It localises to the mitochondrion matrix. The catalysed reaction is succinyl-CoA + glycine + H(+) = 5-aminolevulinate + CO2 + CoA. Its pathway is porphyrin-containing compound metabolism; protoporphyrin-IX biosynthesis; 5-aminolevulinate from glycine: step 1/1. With respect to regulation, ihnhibited by hemin. Functionally, catalyzes the synthesis of 5-aminolevulinate (ALA) from succinyl-CoA and glycine, the first and rate-limiting step in heme biosynthesis. This is 5-aminolevulinate synthase, mitochondrial from Saccharomyces cerevisiae (strain ATCC 204508 / S288c) (Baker's yeast).